We begin with the raw amino-acid sequence, 533 residues long: E3 ubiquitin-protein ligase MGRN1 (533 aa).

A lipid anchor (N-myristoyl glycine) is attached at glycine 2. The RING-type zinc-finger motif lies at glutamate 278–cysteine 317. Positions proline 385–proline 388 match the Required for TSG101-binding motif. Tyrosine 390 is subject to Phosphotyrosine. The disordered stretch occupies residues glutamine 421 to leucine 519. Residues glycine 423 to serine 439 show a composition bias toward polar residues. Phosphoserine is present on residues serine 429, serine 450, and serine 502. Acidic residues predominate over residues glutamate 443–glutamate 454.

In terms of assembly, interacts with MC1R and MC4R. Interacts with TSG101. Interacts with mislocalized cytosolically exposed PRNP; this interaction alters MGRN1 subcellular location and causes lysosomal enlargement. Autoubiquitinated in vitro.

It localises to the cytoplasm. Its subcellular location is the cytosol. The protein resides in the cell membrane. It is found in the early endosome. It carries out the reaction S-ubiquitinyl-[E2 ubiquitin-conjugating enzyme]-L-cysteine + [acceptor protein]-L-lysine = [E2 ubiquitin-conjugating enzyme]-L-cysteine + N(6)-ubiquitinyl-[acceptor protein]-L-lysine.. It participates in protein modification; protein ubiquitination. E3 ubiquitin-protein ligase. Mediates TSG101 monoubiquitination at multiple sites. Plays a role in the regulation of endosome-to-lysosome trafficking. Impairs MC1R- and MC4R-signaling by competing with GNAS-binding to MCRs and inhibiting agonist-induced cAMP production. Does not inhibit ADRB2-signaling. Does not promote MC1R ubiquitination. Also acts as a negative regulator of hedgehog signaling. The protein is E3 ubiquitin-protein ligase MGRN1 (Mgrn1) of Rattus norvegicus (Rat).